The primary structure comprises 695 residues: UvrABC system protein B (695 aa).

A Helicase ATP-binding domain is found at 31–414 (EGIESGLSFQ…EIQRSGQIAE (384 aa)). 44–51 (GVTGSGKT) lines the ATP pocket. Positions 97-120 (YYDYYQPEAYVPSRDLFIEKDSSI) match the Beta-hairpin motif. Residues 435–601 (QVDDLMSEVS…GVNKRIKDLI (167 aa)) enclose the Helicase C-terminal domain. A UVR domain is found at 632-667 (AKEIQRLEKSMLEAARNMEFEQAAQYRDEIKNLRSK).

Belongs to the UvrB family. Forms a heterotetramer with UvrA during the search for lesions. Interacts with UvrC in an incision complex.

The protein localises to the cytoplasm. The UvrABC repair system catalyzes the recognition and processing of DNA lesions. A damage recognition complex composed of 2 UvrA and 2 UvrB subunits scans DNA for abnormalities. Upon binding of the UvrA(2)B(2) complex to a putative damaged site, the DNA wraps around one UvrB monomer. DNA wrap is dependent on ATP binding by UvrB and probably causes local melting of the DNA helix, facilitating insertion of UvrB beta-hairpin between the DNA strands. Then UvrB probes one DNA strand for the presence of a lesion. If a lesion is found the UvrA subunits dissociate and the UvrB-DNA preincision complex is formed. This complex is subsequently bound by UvrC and the second UvrB is released. If no lesion is found, the DNA wraps around the other UvrB subunit that will check the other stand for damage. The sequence is that of UvrABC system protein B from Nitrosomonas europaea (strain ATCC 19718 / CIP 103999 / KCTC 2705 / NBRC 14298).